The following is a 292-amino-acid chain: Lipoyl synthase (292 aa).

Residues Cys38, Cys43, Cys49, Cys64, Cys68, Cys71, and Ser277 each contribute to the [4Fe-4S] cluster site. In terms of domain architecture, Radical SAM core spans Trp50–Arg266.

Belongs to the radical SAM superfamily. Lipoyl synthase family. It depends on [4Fe-4S] cluster as a cofactor.

It is found in the cytoplasm. It carries out the reaction [[Fe-S] cluster scaffold protein carrying a second [4Fe-4S](2+) cluster] + N(6)-octanoyl-L-lysyl-[protein] + 2 oxidized [2Fe-2S]-[ferredoxin] + 2 S-adenosyl-L-methionine + 4 H(+) = [[Fe-S] cluster scaffold protein] + N(6)-[(R)-dihydrolipoyl]-L-lysyl-[protein] + 4 Fe(3+) + 2 hydrogen sulfide + 2 5'-deoxyadenosine + 2 L-methionine + 2 reduced [2Fe-2S]-[ferredoxin]. Its pathway is protein modification; protein lipoylation via endogenous pathway; protein N(6)-(lipoyl)lysine from octanoyl-[acyl-carrier-protein]: step 2/2. Catalyzes the radical-mediated insertion of two sulfur atoms into the C-6 and C-8 positions of the octanoyl moiety bound to the lipoyl domains of lipoate-dependent enzymes, thereby converting the octanoylated domains into lipoylated derivatives. The chain is Lipoyl synthase from Chlorobium limicola (strain DSM 245 / NBRC 103803 / 6330).